The primary structure comprises 444 residues: 23S rRNA (uracil(1939)-C(5))-methyltransferase RlmD (444 aa).

Positions 5 to 67 constitute a TRAM domain; the sequence is RNRLDRTPFQ…RHFDEAKTVE (63 aa). The [4Fe-4S] cluster site is built by Cys-80, Cys-86, Cys-89, and Cys-168. S-adenosyl-L-methionine-binding residues include Gln-276, Phe-305, Asn-310, Glu-326, Asp-353, and Asp-374. Residue Cys-400 is the Nucleophile of the active site.

The protein belongs to the class I-like SAM-binding methyltransferase superfamily. RNA M5U methyltransferase family. RlmD subfamily.

The enzyme catalyses uridine(1939) in 23S rRNA + S-adenosyl-L-methionine = 5-methyluridine(1939) in 23S rRNA + S-adenosyl-L-homocysteine + H(+). Its function is as follows. Catalyzes the formation of 5-methyl-uridine at position 1939 (m5U1939) in 23S rRNA. The polypeptide is 23S rRNA (uracil(1939)-C(5))-methyltransferase RlmD (Xanthomonas euvesicatoria pv. vesicatoria (strain 85-10) (Xanthomonas campestris pv. vesicatoria)).